Reading from the N-terminus, the 210-residue chain is MENVTVVDHPLLKRDLTLLRREETPHGQFRKTVSDAAAILAYEAMRDIELEETSIETPLEQTTGYEIAEEVMVVPIMRAGLGMVDGFVRYVPEARVGHLGMQRDEETYRPVDYYSNIPSTIGHAHVFVVDPMLATGGSASFAIDHLKEEGGQDFTFACLVAAPEGVQKLREEHPDVPVVTAVLDRELDDNAFIRPGLGDAGDRIFGTRES.

5-phospho-alpha-D-ribose 1-diphosphate contacts are provided by residues arginine 78, arginine 103, and 130–138 (DPMLATGGS). Residues isoleucine 193 and 198-200 (GDA) contribute to the uracil site. Aspartate 199 serves as a coordination point for 5-phospho-alpha-D-ribose 1-diphosphate.

It belongs to the UPRTase family. It depends on Mg(2+) as a cofactor.

The catalysed reaction is UMP + diphosphate = 5-phospho-alpha-D-ribose 1-diphosphate + uracil. The protein operates within pyrimidine metabolism; UMP biosynthesis via salvage pathway; UMP from uracil: step 1/1. With respect to regulation, allosterically activated by GTP. Its function is as follows. Catalyzes the conversion of uracil and 5-phospho-alpha-D-ribose 1-diphosphate (PRPP) to UMP and diphosphate. This chain is Uracil phosphoribosyltransferase, found in Salinibacter ruber (strain DSM 13855 / M31).